A 125-amino-acid polypeptide reads, in one-letter code: Large ribosomal subunit protein bL12 (125 aa).

It belongs to the bacterial ribosomal protein bL12 family. As to quaternary structure, homodimer. Part of the ribosomal stalk of the 50S ribosomal subunit. Forms a multimeric L10(L12)X complex, where L10 forms an elongated spine to which 2 to 4 L12 dimers bind in a sequential fashion. Binds GTP-bound translation factors.

In terms of biological role, forms part of the ribosomal stalk which helps the ribosome interact with GTP-bound translation factors. Is thus essential for accurate translation. This Thioalkalivibrio sulfidiphilus (strain HL-EbGR7) protein is Large ribosomal subunit protein bL12.